Consider the following 455-residue polypeptide: Chromosomal replication initiator protein DnaA 2 (455 aa).

Residues 1 to 95 (MLTCNDCSTW…KRSSPLVTPS (95 aa)) are domain I, interacts with DnaA modulators. The interval 96-112 (IAKPATEVSEENKDFQL) is domain II. Residues 113–328 (KLNGAYRFDN…GAINKLTAYC (216 aa)) form a domain III, AAA+ region region. Glycine 157, glycine 159, lysine 160, and threonine 161 together coordinate ATP. The segment at 329–455 (LLFNKPLTET…IAIDSPQHFV (127 aa)) is domain IV, binds dsDNA.

This sequence belongs to the DnaA family. In terms of assembly, oligomerizes as a right-handed, spiral filament on DNA at oriC.

It is found in the cytoplasm. Plays an essential role in the initiation and regulation of chromosomal replication. ATP-DnaA binds to the origin of replication (oriC) to initiate formation of the DNA replication initiation complex once per cell cycle. Binds the DnaA box (a 9 base pair repeat at the origin) and separates the double-stranded (ds)DNA. Forms a right-handed helical filament on oriC DNA; dsDNA binds to the exterior of the filament while single-stranded (ss)DNA is stabiized in the filament's interior. The ATP-DnaA-oriC complex binds and stabilizes one strand of the AT-rich DNA unwinding element (DUE), permitting loading of DNA polymerase. After initiation quickly degrades to an ADP-DnaA complex that is not apt for DNA replication. Binds acidic phospholipids. This is Chromosomal replication initiator protein DnaA 2 from Chlamydia trachomatis serovar D (strain ATCC VR-885 / DSM 19411 / UW-3/Cx).